Consider the following 562-residue polypeptide: MOB kinase activator-like 2 (562 aa).

Residues 30-50 (KSGSVQGTTATATATGPPSPP) form a disordered region. The span at 31–45 (SGSVQGTTATATATG) shows a compositional bias: low complexity. Residues Cys170, Cys175, His250, and His255 each contribute to the Zn(2+) site. Disordered stretches follow at residues 304–378 (DDTS…TASA), 468–523 (NFSN…STTV), and 538–562 (GASAGGGGNAVSAATGGATSASSTA). Composition is skewed to low complexity over residues 305 to 349 (DTSG…NSTS), 357 to 378 (NSQSNSNSHSNSSNSHTTTASA), and 471 to 481 (NNNNNNHNLNH). Positions 482 to 514 (LNHHHHHHHHQHHHQHHPHGHHGHQGHQGHQGH) are enriched in basic residues. Over residues 547–562 (AVSAATGGATSASSTA) the composition is skewed to low complexity.

This sequence belongs to the MOB1/phocein family. As to quaternary structure, interacts with and activates trc, also interacts with wts.

Its subcellular location is the cytoplasm. The protein resides in the nucleus. Its function is as follows. Required for the normal morphogenesis of a variety of polarized outgrowths including epidermal hairs, bristles, arista laterals, and dendrites. The polypeptide is MOB kinase activator-like 2 (Drosophila pseudoobscura pseudoobscura (Fruit fly)).